Reading from the N-terminus, the 266-residue chain is Hydroxyethylthiazole kinase (266 aa).

Met-45 serves as a coordination point for substrate. Lys-121 and Ser-167 together coordinate ATP. Gly-194 is a substrate binding site.

Belongs to the Thz kinase family. Mg(2+) is required as a cofactor.

It catalyses the reaction 5-(2-hydroxyethyl)-4-methylthiazole + ATP = 4-methyl-5-(2-phosphooxyethyl)-thiazole + ADP + H(+). Its pathway is cofactor biosynthesis; thiamine diphosphate biosynthesis; 4-methyl-5-(2-phosphoethyl)-thiazole from 5-(2-hydroxyethyl)-4-methylthiazole: step 1/1. In terms of biological role, catalyzes the phosphorylation of the hydroxyl group of 4-methyl-5-beta-hydroxyethylthiazole (THZ). The chain is Hydroxyethylthiazole kinase from Methanocella arvoryzae (strain DSM 22066 / NBRC 105507 / MRE50).